A 258-amino-acid chain; its full sequence is 2-oxo-tetronate isomerase (258 aa).

Catalysis depends on glutamate 143, which acts as the Proton donor/acceptor. Residues glutamate 143, aspartate 178, glutamine 204, and glutamate 240 each coordinate Mg(2+). The active-site Proton donor/acceptor is the glutamate 240.

Belongs to the hyi family. OtnI subfamily.

The catalysed reaction is 2-dehydro-L-erythronate = 3-dehydro-L-erythronate. It carries out the reaction 2-dehydro-D-erythronate = 3-dehydro-D-erythronate. In terms of biological role, catalyzes the isomerization of 2-oxo-tetronate to 3-oxo-tetronate. In Haemophilus influenzae (strain ATCC 51907 / DSM 11121 / KW20 / Rd), this protein is 2-oxo-tetronate isomerase.